The primary structure comprises 500 residues: tRNA (guanine(37)-N(1))-methyltransferase (500 aa).

Residues H215, 253-254 (DL), 281-282 (DA), and N312 contribute to the S-adenosyl-L-methionine site. The interval 463 to 500 (QIVAKKTPKPAPRPLPAKNKTTPDTNKMETDLTKLEMK) is disordered. Positions 488–500 (NKMETDLTKLEMK) are enriched in basic and acidic residues.

This sequence belongs to the class I-like SAM-binding methyltransferase superfamily. TRM5/TYW2 family. In terms of assembly, monomer.

It localises to the mitochondrion matrix. The protein resides in the nucleus. Its subcellular location is the cytoplasm. It carries out the reaction guanosine(37) in tRNA + S-adenosyl-L-methionine = N(1)-methylguanosine(37) in tRNA + S-adenosyl-L-homocysteine + H(+). Its function is as follows. Specifically methylates the N1 position of guanosine-37 in various cytoplasmic and mitochondrial tRNAs. Methylation is not dependent on the nature of the nucleoside 5' of the target nucleoside. This is the first step in the biosynthesis of wybutosine (yW), a modified base adjacent to the anticodon of tRNAs and required for accurate decoding. This chain is tRNA (guanine(37)-N(1))-methyltransferase, found in Anopheles darlingi (Mosquito).